Reading from the N-terminus, the 378-residue chain is UPF0725 protein At1g23970 (378 aa).

The protein belongs to the UPF0725 (EMB2204) family.

This Arabidopsis thaliana (Mouse-ear cress) protein is UPF0725 protein At1g23970.